A 360-amino-acid chain; its full sequence is Spermidine/putrescine-binding periplasmic protein 1 (360 aa).

An N-terminal signal peptide occupies residues 1–16 (MKKFAGLITASFVAAT).

Belongs to the bacterial solute-binding protein PotD/PotF family.

The protein localises to the periplasm. Required for the activity of the bacterial periplasmic transport system of putrescine and spermidine. Polyamine binding protein. The polypeptide is Spermidine/putrescine-binding periplasmic protein 1 (potD-B) (Haemophilus influenzae (strain ATCC 51907 / DSM 11121 / KW20 / Rd)).